Consider the following 287-residue polypeptide: Elongation factor Ts (287 aa).

Residues 80–83 form an involved in Mg(2+) ion dislocation from EF-Tu region; the sequence is TDFL.

The protein belongs to the EF-Ts family.

The protein resides in the cytoplasm. Functionally, associates with the EF-Tu.GDP complex and induces the exchange of GDP to GTP. It remains bound to the aminoacyl-tRNA.EF-Tu.GTP complex up to the GTP hydrolysis stage on the ribosome. The protein is Elongation factor Ts of Pseudomonas fluorescens (strain Pf0-1).